Here is a 238-residue protein sequence, read N- to C-terminus: Uridylate kinase (238 aa).

Position 12 to 15 (12 to 15) interacts with ATP; it reads KLSG. Glycine 54 is a UMP binding site. 2 residues coordinate ATP: glycine 55 and arginine 59. Residues aspartate 74 and 135–142 each bind UMP; that span reads TGNPYFTT. The ATP site is built by threonine 162, asparagine 163, tyrosine 168, and aspartate 171.

Belongs to the UMP kinase family. As to quaternary structure, homohexamer.

The protein localises to the cytoplasm. It carries out the reaction UMP + ATP = UDP + ADP. It participates in pyrimidine metabolism; CTP biosynthesis via de novo pathway; UDP from UMP (UMPK route): step 1/1. With respect to regulation, inhibited by UTP. Its function is as follows. Catalyzes the reversible phosphorylation of UMP to UDP. This Nitrobacter hamburgensis (strain DSM 10229 / NCIMB 13809 / X14) protein is Uridylate kinase.